The primary structure comprises 405 residues: SPbeta prophage-derived uncharacterized protein YonJ (405 aa).

Residues 72-101 (DESNNSLLELELKKVEIMEERKKLQAVKHE) adopt a coiled-coil conformation.

This is SPbeta prophage-derived uncharacterized protein YonJ (yonJ) from Bacillus subtilis (strain 168).